Consider the following 166-residue polypeptide: MALGLEDKKAIVAEVSEVAKTALSAVVADSRGVTVSSMTELRKEAREAGVYVRVVRNTLARRAVEGTDFECLAESFVGPTLIAFSNEHPGAAARLLKAFAKTNSKFEVKALAFNGELIPAGDIDRLATLPTYDEAIAKLMSVIQGATSKFVRTLAAVRDQKEQEAA.

This sequence belongs to the universal ribosomal protein uL10 family. Part of the ribosomal stalk of the 50S ribosomal subunit. The N-terminus interacts with L11 and the large rRNA to form the base of the stalk. The C-terminus forms an elongated spine to which L12 dimers bind in a sequential fashion forming a multimeric L10(L12)X complex.

Forms part of the ribosomal stalk, playing a central role in the interaction of the ribosome with GTP-bound translation factors. This chain is Large ribosomal subunit protein uL10, found in Marinomonas sp. (strain MWYL1).